The chain runs to 139 residues: Lysozyme (139 aa).

An N-terminal signal peptide occupies residues 1-19 (MTKYVILLAVLAFALHCDA). A C-type lysozyme domain is found at 20–139 (KRFTRCGLVQ…QHGLPDISDC (120 aa)). Cystine bridges form between Cys-25-Cys-139, Cys-46-Cys-129, Cys-81-Cys-95, and Cys-91-Cys-109. Residues Glu-51 and Asp-69 contribute to the active site.

Belongs to the glycosyl hydrolase 22 family.

It catalyses the reaction Hydrolysis of (1-&gt;4)-beta-linkages between N-acetylmuramic acid and N-acetyl-D-glucosamine residues in a peptidoglycan and between N-acetyl-D-glucosamine residues in chitodextrins.. Lysozymes have primarily a bacteriolytic function; those in tissues and body fluids are associated with the monocyte-macrophage system and enhance the activity of immunoagents. In Hyalophora cecropia (Cecropia moth), this protein is Lysozyme.